Reading from the N-terminus, the 72-residue chain is Large ribosomal subunit protein bL31 (72 aa).

Zn(2+)-binding residues include Cys-16, Cys-18, Cys-37, and Cys-40.

This sequence belongs to the bacterial ribosomal protein bL31 family. Type A subfamily. As to quaternary structure, part of the 50S ribosomal subunit. It depends on Zn(2+) as a cofactor.

Its function is as follows. Binds the 23S rRNA. The sequence is that of Large ribosomal subunit protein bL31 from Buchnera aphidicola subsp. Schizaphis graminum (strain Sg).